The primary structure comprises 306 residues: Homeobox protein CUP9 (306 aa).

Residues Pro-75–Lys-123 form a disordered region. A compositionally biased stretch (low complexity) spans Ser-79 to Ser-96. A compositionally biased stretch (polar residues) spans Lys-97–Gly-110. A DNA-binding region (homeobox; TALE-type) is located at residues Asn-162–Asp-224.

The protein belongs to the TALE/CUP9 homeobox family.

It localises to the nucleus. Functionally, probable DNA-binding protein which plays a role in protecting yeast cells against copper toxicity. May regulate the expression of important copper homeostatic genes. This Saccharomyces cerevisiae (strain ATCC 204508 / S288c) (Baker's yeast) protein is Homeobox protein CUP9 (CUP9).